The following is a 412-amino-acid chain: Branched-chain alpha-ketoacid dehydrogenase kinase (412 aa).

The transit peptide at 1 to 30 (MILASVLRSGPGGGLPLRPLLGPALALRAR) directs the protein to the mitochondrion. At S31 the chain carries Phosphoserine. S52 is subject to Phosphoserine; by autocatalysis. A Histidine kinase domain is found at 159-404 (LDDHKDVVTL…DVYLRLRHID (246 aa)). N6-acetyllysine is present on residues K192 and K233. Residues N279 and D315 each coordinate ATP. N279 serves as a coordination point for Mg(2+). K(+)-binding residues include V328, D330, and F333. T334 and T335 together coordinate ATP. 2 positions are modified to phosphoserine: S356 and S360. ATP-binding residues include H364, G367, and L370. G367 provides a ligand contact to K(+).

It belongs to the PDK/BCKDK protein kinase family. In terms of assembly, homodimer. Homotetramer. Dimerizes through interaction of two opposing nucleotide-binding domains. Interacts with E2 component of the branched-chain alpha-ketoacid dehydrogenase (BCKDH) complex. Competes with BCKDK for binding to the E2 component; this interaction is modulated by branched-chain alpha-keto acids. At steady state, BCKDH holoenzyme contains BCKDK and BCKDHA is phosphorylated. In response to high levels of branched-chain alpha-keto acids, the inhibitory BCKDK is replaced by activating PPM1K leading to BCKDHA dephosphorylation and BCAA degradation. Autophosphorylated. In terms of tissue distribution, ubiquitous.

Its subcellular location is the mitochondrion matrix. It catalyses the reaction L-seryl-[3-methyl-2-oxobutanoate dehydrogenase] + ATP = O-phospho-L-seryl-[3-methyl-2-oxobutanoate dehydrogenase] + ADP + H(+). The enzyme catalyses L-seryl-[protein] + ATP = O-phospho-L-seryl-[protein] + ADP + H(+). It participates in protein modification. Its activity is regulated as follows. Allosterically inhibited by certain thiazoles and thiophenes: thiazoles increase interaction with DBT/BCKDH-E2, whereas thiophenes reduce this interaction. Inhibited by 3,6- dichlorobenzo[b]thiophene-2-carboxylic acid (BT2). The ATP binding is mediated by both potassium and magnesium ions. Functionally, serine/threonine-protein kinase component of macronutrients metabolism. Forms a functional kinase and phosphatase pair with PPM1K, serving as a metabolic regulatory node that coordinates branched-chain amino acids (BCAAs) with glucose and lipid metabolism via two distinct phosphoprotein targets: mitochondrial BCKDHA subunit of the branched-chain alpha-ketoacid dehydrogenase (BCKDH) complex and cytosolic ACLY, a lipogenic enzyme of Krebs cycle. Phosphorylates and inactivates mitochondrial BCKDH complex a multisubunit complex consisting of three multimeric components each involved in different steps of BCAA catabolism: E1 composed of BCKDHA and BCKDHB, E2 core composed of DBT monomers, and E3 composed of DLD monomers. Associates with the E2 component of BCKDH complex and phosphorylates BCKDHA on Ser-337, leading to conformational changes that interrupt substrate channeling between E1 and E2 and inactivates the BCKDH complex. Phosphorylates ACLY on Ser-455 in response to changes in cellular carbohydrate abundance such as occurs during fasting to feeding metabolic transition. Refeeding stimulates MLXIPL/ChREBP transcription factor, leading to increased BCKDK to PPM1K expression ratio, phosphorylation and activation of ACLY that ultimately results in the generation of malonyl-CoA and oxaloacetate immediate substrates of de novo lipogenesis and glucogenesis, respectively. Recognizes phosphosites having SxxE/D canonical motif. The sequence is that of Branched-chain alpha-ketoacid dehydrogenase kinase from Homo sapiens (Human).